Here is a 98-residue protein sequence, read N- to C-terminus: NADH-ubiquinone oxidoreductase chain 4L (98 aa).

3 helical membrane-spanning segments follow: residues 1 to 21 (MTLI…GLLM), 29 to 49 (ALLC…LTIL), and 61 to 81 (IILL…LVMV).

Belongs to the complex I subunit 4L family. As to quaternary structure, core subunit of respiratory chain NADH dehydrogenase (Complex I) which is composed of 45 different subunits.

It is found in the mitochondrion inner membrane. It carries out the reaction a ubiquinone + NADH + 5 H(+)(in) = a ubiquinol + NAD(+) + 4 H(+)(out). Its function is as follows. Core subunit of the mitochondrial membrane respiratory chain NADH dehydrogenase (Complex I) which catalyzes electron transfer from NADH through the respiratory chain, using ubiquinone as an electron acceptor. Part of the enzyme membrane arm which is embedded in the lipid bilayer and involved in proton translocation. This Megaptera novaeangliae (Humpback whale) protein is NADH-ubiquinone oxidoreductase chain 4L (MT-ND4L).